Here is a 455-residue protein sequence, read N- to C-terminus: Bifunctional protein GlmU (455 aa).

The tract at residues M1–R226 is pyrophosphorylase. UDP-N-acetyl-alpha-D-glucosamine contacts are provided by residues L8 to G11, K22, Q73, G78 to T79, Y99 to D101, G136, E151, N166, and N224. D101 serves as a coordination point for Mg(2+). Residue N224 coordinates Mg(2+). Residues R227–Q247 are linker. Positions G248–S455 are N-acetyltransferase. The UDP-N-acetyl-alpha-D-glucosamine site is built by R330 and K348. H360 functions as the Proton acceptor in the catalytic mechanism. Y363 and N374 together coordinate UDP-N-acetyl-alpha-D-glucosamine. Acetyl-CoA-binding positions include A377, N383–Y384, S402, A420, and R437.

The protein in the N-terminal section; belongs to the N-acetylglucosamine-1-phosphate uridyltransferase family. It in the C-terminal section; belongs to the transferase hexapeptide repeat family. As to quaternary structure, homotrimer. Requires Mg(2+) as cofactor.

The protein localises to the cytoplasm. The enzyme catalyses alpha-D-glucosamine 1-phosphate + acetyl-CoA = N-acetyl-alpha-D-glucosamine 1-phosphate + CoA + H(+). The catalysed reaction is N-acetyl-alpha-D-glucosamine 1-phosphate + UTP + H(+) = UDP-N-acetyl-alpha-D-glucosamine + diphosphate. The protein operates within nucleotide-sugar biosynthesis; UDP-N-acetyl-alpha-D-glucosamine biosynthesis; N-acetyl-alpha-D-glucosamine 1-phosphate from alpha-D-glucosamine 6-phosphate (route II): step 2/2. It participates in nucleotide-sugar biosynthesis; UDP-N-acetyl-alpha-D-glucosamine biosynthesis; UDP-N-acetyl-alpha-D-glucosamine from N-acetyl-alpha-D-glucosamine 1-phosphate: step 1/1. It functions in the pathway bacterial outer membrane biogenesis; LPS lipid A biosynthesis. Functionally, catalyzes the last two sequential reactions in the de novo biosynthetic pathway for UDP-N-acetylglucosamine (UDP-GlcNAc). The C-terminal domain catalyzes the transfer of acetyl group from acetyl coenzyme A to glucosamine-1-phosphate (GlcN-1-P) to produce N-acetylglucosamine-1-phosphate (GlcNAc-1-P), which is converted into UDP-GlcNAc by the transfer of uridine 5-monophosphate (from uridine 5-triphosphate), a reaction catalyzed by the N-terminal domain. The protein is Bifunctional protein GlmU of Pseudomonas putida (strain GB-1).